Consider the following 238-residue polypeptide: ATP-dependent dethiobiotin synthetase BioD (238 aa).

Position 12-17 (12-17 (EVGKTV)) interacts with ATP. Residue Thr-16 coordinates Mg(2+). Lys-37 is a catalytic residue. Substrate is bound at residue Thr-41. ATP-binding positions include Asp-50, 109–112 (EGAG), 170–171 (GS), and 200–202 (PAG). Asp-50 and Glu-109 together coordinate Mg(2+).

It belongs to the dethiobiotin synthetase family. As to quaternary structure, homodimer. Mg(2+) is required as a cofactor.

The protein localises to the cytoplasm. The catalysed reaction is (7R,8S)-7,8-diammoniononanoate + CO2 + ATP = (4R,5S)-dethiobiotin + ADP + phosphate + 3 H(+). The protein operates within cofactor biosynthesis; biotin biosynthesis; biotin from 7,8-diaminononanoate: step 1/2. Functionally, catalyzes a mechanistically unusual reaction, the ATP-dependent insertion of CO2 between the N7 and N8 nitrogen atoms of 7,8-diaminopelargonic acid (DAPA, also called 7,8-diammoniononanoate) to form a ureido ring. This chain is ATP-dependent dethiobiotin synthetase BioD, found in Streptomyces avermitilis (strain ATCC 31267 / DSM 46492 / JCM 5070 / NBRC 14893 / NCIMB 12804 / NRRL 8165 / MA-4680).